The following is a 304-amino-acid chain: Undecaprenyl-diphosphatase (304 aa).

The next 7 helical transmembrane spans lie at 1–21, 54–74, 90–110, 114–134, 192–212, 225–245, and 253–273; these read MSLLAAVFLGVLQAATEFLPV, TTLAVLVYFRTEILSLLAAGL, LAWFIVLGTVPAAVLGKLFEE, ALGNWVIAGSLVVLGLVLLAA, FLLSVPIILGAGGYKLWKTVP, LVGTAVSAVAGYLVIDWLLGW, and LFVVWRIAAGVALAILIWQGV.

This sequence belongs to the UppP family.

The protein localises to the cell inner membrane. The enzyme catalyses di-trans,octa-cis-undecaprenyl diphosphate + H2O = di-trans,octa-cis-undecaprenyl phosphate + phosphate + H(+). Catalyzes the dephosphorylation of undecaprenyl diphosphate (UPP). Confers resistance to bacitracin. The polypeptide is Undecaprenyl-diphosphatase (Anaeromyxobacter sp. (strain Fw109-5)).